Reading from the N-terminus, the 105-residue chain is Large ribosomal subunit protein uL24 (105 aa).

The protein belongs to the universal ribosomal protein uL24 family. As to quaternary structure, part of the 50S ribosomal subunit.

Functionally, one of two assembly initiator proteins, it binds directly to the 5'-end of the 23S rRNA, where it nucleates assembly of the 50S subunit. In terms of biological role, one of the proteins that surrounds the polypeptide exit tunnel on the outside of the subunit. This Marinomonas sp. (strain MWYL1) protein is Large ribosomal subunit protein uL24.